The primary structure comprises 464 residues: Phosphoglucosamine mutase (464 aa).

Ser112 acts as the Phosphoserine intermediate in catalysis. Ser112, Asp252, Asp254, and Asp256 together coordinate Mg(2+). Ser112 carries the post-translational modification Phosphoserine.

It belongs to the phosphohexose mutase family. Mg(2+) serves as cofactor. Post-translationally, activated by phosphorylation.

The catalysed reaction is alpha-D-glucosamine 1-phosphate = D-glucosamine 6-phosphate. Catalyzes the conversion of glucosamine-6-phosphate to glucosamine-1-phosphate. This is Phosphoglucosamine mutase from Synechococcus sp. (strain CC9902).